We begin with the raw amino-acid sequence, 175 residues long: Regenerating islet-derived protein 3-alpha (175 aa).

The N-terminal stretch at 1–26 is a signal peptide; the sequence is MLPHLVLNSISWMLLSCLLFVFQVQG. A propeptide spanning residues 27–37 is cleaved from the precursor; that stretch reads EDFQKEVPSPR. Cystine bridges form between C40/C51, C68/C171, and C146/C163. Positions 47-172 constitute a C-type lectin domain; the sequence is YRSHCYALVM…CDGTLPFVCK (126 aa). Zn(2+) contacts are provided by H50, H107, E121, and H145. Residues 103-118 are sufficient to activate EXTL3; it reads WIGLHDPTMGQQPNGG.

As to quaternary structure, forms a hexameric membrane-permeabilizing oligomeric pore on membrane phospholipids. The hexamer is formed by three dimers related by helical symmetry. Forms filaments, filamentation traps pore complexes and limits damage to host cells. Interacts with EXTL3. Proteolytic processing by trypsin removes an inhibitory N-terminal propeptide and is essential for peptidoglycan binding and antibacterial activity. Small intestine and pancreas.

Its subcellular location is the secreted. Its function is as follows. Bactericidal C-type lectin. The lack of the EPN motif may explain its inability to bind peptidoglycan. Functionally, acts as a hormone in response to different stimuli like anti-inflammatory signals, such as IL17A, or gut microbiome. Secreted by different cell types to activate its receptor EXTL3 and induce cell specific signaling pathways. Induced by IL17A in keratinocytes, regulates keratinocyte proliferation and differentiation after skin injury via activation of EXTL3-PI3K-AKT signaling pathway. In parallel, inhibits skin inflammation through the inhibition of inflammatory cytokines such as IL6 and TNF. In pancreas, is able to permealize beta-cells membrane and stimulate their proliferation. This Mus musculus (Mouse) protein is Regenerating islet-derived protein 3-alpha (Reg3a).